A 500-amino-acid chain; its full sequence is Na(+)/H(+) antiporter NhaB (500 aa).

A run of 11 helical transmembrane segments spans residues 23–43 (VVICLFLVLNPLLLVTIGPVA), 53–73 (IFTLAMALKCYPLMPGGLLLI), 96–116 (VILLLMFMVAGIHFMKELLLF), 129–149 (AILALLFCVLSAFLSAFLDAL), 150–170 (TVTAVIISAAVGFYAVYHRVA), 205–225 (LLMHGAVGTALGGVCTLVGEP), 238–258 (FVDFFLKVAPVSLPVLGAGLV), 311–331 (ILIICLGLHVAEVGLIGLMVI), 350–370 (FQDAMPFTSLLVVFFAVVAVI), 450–470 (ATPNGQAAFLFLLTSAIAPLI), and 477–497 (MVWMALPYTVVMGGLGWWAVT).

It belongs to the NhaB Na(+)/H(+) (TC 2.A.34) antiporter family.

It localises to the cell inner membrane. It catalyses the reaction 2 Na(+)(in) + 3 H(+)(out) = 2 Na(+)(out) + 3 H(+)(in). In terms of biological role, na(+)/H(+) antiporter that extrudes sodium in exchange for external protons. This Pseudomonas putida (strain ATCC 47054 / DSM 6125 / CFBP 8728 / NCIMB 11950 / KT2440) protein is Na(+)/H(+) antiporter NhaB.